Consider the following 199-residue polypeptide: Adenylate kinase (199 aa).

An ATP-binding site is contributed by 8–13; that stretch reads GAGKGT. Residues 28 to 57 are NMP; that stretch reads STGDIFRANIKNKTELGQQVKAIVDAGDYV. Residues Thr29, Arg34, 55-57, 83-86, and Gln90 contribute to the AMP site; these read DYV and GYPR. Residues 124–134 form an LID region; that stretch reads KRAREQGRADD. Arg125 is a binding site for ATP. Positions 131 and 142 each coordinate AMP. Gly170 contacts ATP.

It belongs to the adenylate kinase family. Monomer.

Its subcellular location is the cytoplasm. It catalyses the reaction AMP + ATP = 2 ADP. It functions in the pathway purine metabolism; AMP biosynthesis via salvage pathway; AMP from ADP: step 1/1. Functionally, catalyzes the reversible transfer of the terminal phosphate group between ATP and AMP. Plays an important role in cellular energy homeostasis and in adenine nucleotide metabolism. In Leifsonia xyli subsp. xyli (strain CTCB07), this protein is Adenylate kinase.